A 419-amino-acid polypeptide reads, in one-letter code: Protein FAM181B (419 aa).

The interval 107 to 157 (LMGAAPPGPSSPGAADTPAKRPLAGAQTVPVPVPAHGKAAPRREASQAAAA) is disordered.

This sequence belongs to the FAM181 family.

This is Protein FAM181B (FAM181B) from Bos taurus (Bovine).